The chain runs to 449 residues: Asparagine--tRNA ligase (449 aa).

It belongs to the class-II aminoacyl-tRNA synthetase family. In terms of assembly, homodimer.

The protein resides in the cytoplasm. It catalyses the reaction tRNA(Asn) + L-asparagine + ATP = L-asparaginyl-tRNA(Asn) + AMP + diphosphate + H(+). This chain is Asparagine--tRNA ligase, found in Desulfotalea psychrophila (strain LSv54 / DSM 12343).